The chain runs to 365 residues: DNA replication and repair protein RecF (365 aa).

30–37 (GNNGMGKT) is a binding site for ATP.

This sequence belongs to the RecF family.

It localises to the cytoplasm. Functionally, the RecF protein is involved in DNA metabolism; it is required for DNA replication and normal SOS inducibility. RecF binds preferentially to single-stranded, linear DNA. It also seems to bind ATP. This is DNA replication and repair protein RecF from Parabacteroides distasonis (strain ATCC 8503 / DSM 20701 / CIP 104284 / JCM 5825 / NCTC 11152).